The sequence spans 218 residues: Thiopurine S-methyltransferase (218 aa).

S-adenosyl-L-methionine-binding residues include W10, L45, E66, and R123.

Belongs to the class I-like SAM-binding methyltransferase superfamily. TPMT family.

It is found in the cytoplasm. The catalysed reaction is S-adenosyl-L-methionine + a thiopurine = S-adenosyl-L-homocysteine + a thiopurine S-methylether.. This is Thiopurine S-methyltransferase from Pseudomonas paraeruginosa (strain DSM 24068 / PA7) (Pseudomonas aeruginosa (strain PA7)).